Consider the following 108-residue polypeptide: UPF0060 membrane protein YnfA (108 aa).

The Periplasmic segment spans residues 1-5; sequence MLKTT. The helical transmembrane segment at 6 to 26 threads the bilayer; the sequence is LLFFVTALCEIIGCFLPWLWI. At 27-30 the chain is on the cytoplasmic side; the sequence is KRGA. Residues 31–51 traverse the membrane as a helical segment; it reads SVWWLLPAAASLALFVWLLTL. The Periplasmic segment spans residues 52-60; sequence HPAASGRVY. The chain crosses the membrane as a helical span at residues 61–81; that stretch reads AAYGGVYVCTALLWLRVVDGV. The Cytoplasmic segment spans residues 82–84; the sequence is RLT. The helical transmembrane segment at 85–105 threads the bilayer; that stretch reads VYDWCGALIALCGMLIIVVGW. Over 106–108 the chain is Periplasmic; that stretch reads GRT.

Belongs to the UPF0060 family.

The protein localises to the cell inner membrane. This chain is UPF0060 membrane protein YnfA, found in Salmonella paratyphi A (strain ATCC 9150 / SARB42).